Consider the following 439-residue polypeptide: Ribosomal protein uS12 methylthiotransferase RimO (439 aa).

Positions 5–115 constitute an MTTase N-terminal domain; the sequence is PRISFTSLGC…VLDAVHRALP (111 aa). Residues Cys-14, Cys-50, Cys-79, Cys-146, Cys-150, and Cys-153 each contribute to the [4Fe-4S] cluster site. The Radical SAM core domain maps to 132–369; it reads LTPRHYAYLK…MARQQKISAR (238 aa). Residues 372–438 enclose the TRAM domain; it reads KRKVGTRQQI…QYDLHGSVAG (67 aa).

Belongs to the methylthiotransferase family. RimO subfamily. [4Fe-4S] cluster serves as cofactor.

Its subcellular location is the cytoplasm. The catalysed reaction is L-aspartate(89)-[ribosomal protein uS12]-hydrogen + (sulfur carrier)-SH + AH2 + 2 S-adenosyl-L-methionine = 3-methylsulfanyl-L-aspartate(89)-[ribosomal protein uS12]-hydrogen + (sulfur carrier)-H + 5'-deoxyadenosine + L-methionine + A + S-adenosyl-L-homocysteine + 2 H(+). Its function is as follows. Catalyzes the methylthiolation of an aspartic acid residue of ribosomal protein uS12. The polypeptide is Ribosomal protein uS12 methylthiotransferase RimO (Bradyrhizobium diazoefficiens (strain JCM 10833 / BCRC 13528 / IAM 13628 / NBRC 14792 / USDA 110)).